Reading from the N-terminus, the 312-residue chain is Porphobilinogen deaminase (312 aa).

C243 carries the S-(dipyrrolylmethanemethyl)cysteine modification.

This sequence belongs to the HMBS family. Monomer. It depends on dipyrromethane as a cofactor.

It carries out the reaction 4 porphobilinogen + H2O = hydroxymethylbilane + 4 NH4(+). It functions in the pathway porphyrin-containing compound metabolism; protoporphyrin-IX biosynthesis; coproporphyrinogen-III from 5-aminolevulinate: step 2/4. Tetrapolymerization of the monopyrrole PBG into the hydroxymethylbilane pre-uroporphyrinogen in several discrete steps. The polypeptide is Porphobilinogen deaminase (Vibrio campbellii (strain ATCC BAA-1116)).